The following is a 181-amino-acid chain: Protein Syd (181 aa).

The protein belongs to the Syd family.

The protein resides in the cell inner membrane. Functionally, interacts with the SecY protein in vivo. May bind preferentially to an uncomplexed state of SecY, thus functioning either as a chelating agent for excess SecY in the cell or as a regulatory factor that negatively controls the translocase function. This Escherichia coli O81 (strain ED1a) protein is Protein Syd.